We begin with the raw amino-acid sequence, 213 residues long: Na(+)-translocating NADH-quinone reductase subunit D (213 aa).

Transmembrane regions (helical) follow at residues 14 to 34, 42 to 62, 77 to 97, 101 to 121, 131 to 151, 154 to 174, and 183 to 203; these read ALWINNQPLVAILGICSALAV, LTMGLAVSFVTGFASFVVSLL, IIISLFVILIDQFLKAFFFNI, LSVFVGLIITNCIVMGRAESM, FLDGLGSGLGYGWVLVCISII, LFGFGTILGFHIIPKIFYASA, and LGLMVLAPSAFFLLGIMVWLV.

This sequence belongs to the NqrDE/RnfAE family. In terms of assembly, composed of six subunits; NqrA, NqrB, NqrC, NqrD, NqrE and NqrF.

Its subcellular location is the cell inner membrane. It carries out the reaction a ubiquinone + n Na(+)(in) + NADH + H(+) = a ubiquinol + n Na(+)(out) + NAD(+). In terms of biological role, NQR complex catalyzes the reduction of ubiquinone-1 to ubiquinol by two successive reactions, coupled with the transport of Na(+) ions from the cytoplasm to the periplasm. NqrA to NqrE are probably involved in the second step, the conversion of ubisemiquinone to ubiquinol. In Chlamydia muridarum (strain MoPn / Nigg), this protein is Na(+)-translocating NADH-quinone reductase subunit D.